The primary structure comprises 444 residues: Ribosomal protein uS12 methylthiotransferase RimO (444 aa).

The MTTase N-terminal domain maps to 4 to 120 (KSAALVSLGC…LKSFIRDHEA (117 aa)). [4Fe-4S] cluster contacts are provided by Cys-13, Cys-49, Cys-83, Cys-157, Cys-161, and Cys-164. A Radical SAM core domain is found at 143 to 371 (VEGRSSAYVK…LELQRGISRR (229 aa)). The TRAM domain maps to 374 to 442 (ESLVGRVLPV…DYDVEAELLS (69 aa)).

This sequence belongs to the methylthiotransferase family. RimO subfamily. [4Fe-4S] cluster is required as a cofactor.

It localises to the cytoplasm. The catalysed reaction is L-aspartate(89)-[ribosomal protein uS12]-hydrogen + (sulfur carrier)-SH + AH2 + 2 S-adenosyl-L-methionine = 3-methylsulfanyl-L-aspartate(89)-[ribosomal protein uS12]-hydrogen + (sulfur carrier)-H + 5'-deoxyadenosine + L-methionine + A + S-adenosyl-L-homocysteine + 2 H(+). Catalyzes the methylthiolation of an aspartic acid residue of ribosomal protein uS12. The polypeptide is Ribosomal protein uS12 methylthiotransferase RimO (Syntrophobacter fumaroxidans (strain DSM 10017 / MPOB)).